Reading from the N-terminus, the 347-residue chain is UDP-N-acetylenolpyruvoylglucosamine reductase (347 aa).

The 171-residue stretch at 27-197 (LPARAQRLAR…TGIELRLNKM (171 aa)) folds into the FAD-binding PCMH-type domain. Residue Arg173 is part of the active site. Catalysis depends on Ser247, which acts as the Proton donor. Glu342 is a catalytic residue.

This sequence belongs to the MurB family. FAD is required as a cofactor.

The protein localises to the cytoplasm. It carries out the reaction UDP-N-acetyl-alpha-D-muramate + NADP(+) = UDP-N-acetyl-3-O-(1-carboxyvinyl)-alpha-D-glucosamine + NADPH + H(+). Its pathway is cell wall biogenesis; peptidoglycan biosynthesis. Functionally, cell wall formation. This Alcanivorax borkumensis (strain ATCC 700651 / DSM 11573 / NCIMB 13689 / SK2) protein is UDP-N-acetylenolpyruvoylglucosamine reductase.